The following is a 739-amino-acid chain: Thiamine biosynthesis multifunctional protein ThiED (739 aa).

The segment at 1–210 (MTDFSLYLVT…PSPAEAAREL (210 aa)) is thiamine-phosphate synthase. 4-amino-2-methyl-5-(diphosphooxymethyl)pyrimidine-binding positions include 37–41 (QLRDK) and Asn69. Mg(2+)-binding residues include Asp70 and Asp88. Thr107 lines the 4-amino-2-methyl-5-(diphosphooxymethyl)pyrimidine pocket. 140–142 (TDT) is a 2-[(2R,5Z)-2-carboxy-4-methylthiazol-5(2H)-ylidene]ethyl phosphate binding site. Position 143 (Lys143) interacts with 4-amino-2-methyl-5-(diphosphooxymethyl)pyrimidine. 2-[(2R,5Z)-2-carboxy-4-methylthiazol-5(2H)-ylidene]ethyl phosphate contacts are provided by residues Gly174 and 194–195 (VS). A hydroxymethylpyrimidine/phosphomethylpyrimidine kinase region spans residues 226 to 481 (LTIAGTDPTG…GSGSGPVDHF (256 aa)). Gln263 contributes to the 4-amino-5-hydroxymethyl-2-methylpyrimidine binding site. Positions 527-739 (YTRALWEATG…FDQATRQGWN (213 aa)) are thiaminase-2.

This sequence in the N-terminal section; belongs to the thiamine-phosphate synthase family. It in the central section; belongs to the ThiD family. In the C-terminal section; belongs to the thiaminase-2 family. It depends on Mg(2+) as a cofactor.

It carries out the reaction 2-[(2R,5Z)-2-carboxy-4-methylthiazol-5(2H)-ylidene]ethyl phosphate + 4-amino-2-methyl-5-(diphosphooxymethyl)pyrimidine + 2 H(+) = thiamine phosphate + CO2 + diphosphate. The enzyme catalyses 2-(2-carboxy-4-methylthiazol-5-yl)ethyl phosphate + 4-amino-2-methyl-5-(diphosphooxymethyl)pyrimidine + 2 H(+) = thiamine phosphate + CO2 + diphosphate. The catalysed reaction is 4-methyl-5-(2-phosphooxyethyl)-thiazole + 4-amino-2-methyl-5-(diphosphooxymethyl)pyrimidine + H(+) = thiamine phosphate + diphosphate. It catalyses the reaction 4-amino-5-hydroxymethyl-2-methylpyrimidine + ATP = 4-amino-2-methyl-5-(phosphooxymethyl)pyrimidine + ADP + H(+). It carries out the reaction 4-amino-2-methyl-5-(phosphooxymethyl)pyrimidine + ATP = 4-amino-2-methyl-5-(diphosphooxymethyl)pyrimidine + ADP. Its pathway is cofactor biosynthesis; thiamine diphosphate biosynthesis; 4-amino-2-methyl-5-diphosphomethylpyrimidine from 5-amino-1-(5-phospho-D-ribosyl)imidazole: step 3/3. The protein operates within cofactor biosynthesis; thiamine diphosphate biosynthesis; thiamine phosphate from 4-amino-2-methyl-5-diphosphomethylpyrimidine and 4-methyl-5-(2-phosphoethyl)-thiazole: step 1/1. Its function is as follows. Condenses 4-methyl-5-(beta-hydroxyethyl)thiazole monophosphate (THZ-P) and 2-methyl-4-amino-5-hydroxymethyl pyrimidine pyrophosphate (HMP-PP) to form thiamine monophosphate (TMP). Catalyzes the phosphorylation of hydroxymethylpyrimidine phosphate (HMP-P) to HMP-PP, and of HMP to HMP-P. This is Thiamine biosynthesis multifunctional protein ThiED (thiED) from Corynebacterium efficiens (strain DSM 44549 / YS-314 / AJ 12310 / JCM 11189 / NBRC 100395).